Here is a 422-residue protein sequence, read N- to C-terminus: 5'-deoxyadenosine deaminase (422 aa).

Positions 57 and 59 each coordinate Zn(2+). Substrate is bound by residues glutamate 86 and histidine 178. Zn(2+) is bound at residue histidine 205. Positions 208 and 294 each coordinate substrate. Residue aspartate 294 coordinates Zn(2+).

This sequence belongs to the metallo-dependent hydrolases superfamily. MTA/SAH deaminase family. Homotetramer. Requires Zn(2+) as cofactor.

The enzyme catalyses 5'-deoxyadenosine + H2O + H(+) = 5'-deoxyinosine + NH4(+). The catalysed reaction is S-adenosyl-L-homocysteine + H2O + H(+) = S-inosyl-L-homocysteine + NH4(+). It carries out the reaction S-methyl-5'-thioadenosine + H2O + H(+) = S-methyl-5'-thioinosine + NH4(+). It catalyses the reaction adenosine + H2O + H(+) = inosine + NH4(+). Its pathway is amino-acid biosynthesis; S-adenosyl-L-methionine biosynthesis. In terms of biological role, catalyzes the deamination of three SAM-derived enzymatic products, namely 5'-deoxyadenosine, S-adenosyl-L-homocysteine, and 5'-methylthioadenosine, to produce the inosine analogs. Can also deaminate adenosine. The preferred substrate for this enzyme is 5'-deoxyadenosine, but all these substrates are efficiently deaminated. Likely functions in a S-adenosyl-L-methionine (SAM) recycling pathway from S-adenosyl-L-homocysteine (SAH) produced from SAM-dependent methylation reactions. May also be involved in the recycling of 5'-deoxyadenosine, whereupon the 5'-deoxyribose moiety of 5'-deoxyinosine is further metabolized to deoxyhexoses used for the biosynthesis of aromatic amino acids in methanogens. The sequence is that of 5'-deoxyadenosine deaminase from Methanococcus vannielii (strain ATCC 35089 / DSM 1224 / JCM 13029 / OCM 148 / SB).